The chain runs to 177 residues: uncharacterized protein (177 aa).

A run of 4 helical transmembrane segments spans residues 4-24, 33-53, 80-100, and 115-135; these read IIIL…GFIL, ILSI…LHWI, IAFI…GSFL, and MLGA…LLYV.

Its subcellular location is the cell membrane. This is an uncharacterized protein from Bacillus subtilis (strain 168).